We begin with the raw amino-acid sequence, 79 residues long: Centromere protein X (79 aa).

Methionine 1 is modified (N-acetylmethionine).

It belongs to the CENP-X/MHF2 family. As to quaternary structure, heterodimer with CENPX, sometimes called MHF; this interaction stabilizes both partners. MHF heterodimers can assemble to form tetrameric structures. MHF also coassemble with CENPT-CENPW heterodimers at centromeres to form the tetrameric CENP-T-W-S-X complex. Forms a discrete complex with FANCM and CENPX, called FANCM-MHF; this interaction, probably mediated by direct binding between CENPS and FANCM, leads to synergistic activation of double-stranded DNA binding and strongly stimulates FANCM-mediated DNA remodeling. Recruited by FANCM to the Fanconi anemia (FA) core complex, which consists of CENPS, CENPX, FANCA, FANCB, FANCC, FANCE, FANCF, FANCG, FANCL, FANCM, FAAP24 and FAAP100. The FA core complex associates with Bloom syndrome (BLM) complex, which consists of at least BLM, DNA topoisomerase 3-alpha (TOP3A), RMI1/BLAP75, RPA1/RPA70 and RPA2/RPA32. The super complex between FA and BLM is called BRAFT.

The protein resides in the nucleus. The protein localises to the chromosome. It localises to the centromere. Its subcellular location is the kinetochore. Its function is as follows. DNA-binding component of the Fanconi anemia (FA) core complex. Required for the normal activation of the FA pathway, leading to monoubiquitination of the FANCI-FANCD2 complex in response to DNA damage, cellular resistance to DNA cross-linking drugs, and prevention of chromosomal breakage. In complex with CENPS (MHF heterodimer), crucial cofactor for FANCM in both binding and ATP-dependent remodeling of DNA. Stabilizes FANCM. In complex with CENPS and FANCM (but not other FANC proteins), rapidly recruited to blocked forks and promotes gene conversion at blocked replication forks. In complex with CENPS, CENPT and CENPW (CENP-T-W-S-X heterotetramer), involved in the formation of a functional kinetochore outer plate, which is essential for kinetochore-microtubule attachment and faithful mitotic progression. As a component of MHF and CENP-T-W-S-X complexes, binds DNA and bends it to form a nucleosome-like structure. DNA-binding function is fulfilled in the presence of CENPS, with the following preference for DNA substates: Holliday junction &gt; double-stranded &gt; splay arm &gt; single-stranded. Does not bind DNA on its own. The protein is Centromere protein X (CENPX) of Bos taurus (Bovine).